We begin with the raw amino-acid sequence, 586 residues long: Clathrin heavy chain linker domain-containing protein 1 (586 aa).

Residues 174 to 232 are a coiled coil; that stretch reads MNLDALTKYMKHLEDKYAEIKQAMLIKYVPAQRKADLDEEMIVLLKRRDVAENLNKKLQ.

This is Clathrin heavy chain linker domain-containing protein 1 (CLHC1) from Homo sapiens (Human).